Reading from the N-terminus, the 132-residue chain is Small ribosomal subunit protein uS8 (132 aa).

The protein belongs to the universal ribosomal protein uS8 family. Part of the 30S ribosomal subunit. Contacts proteins S5 and S12.

One of the primary rRNA binding proteins, it binds directly to 16S rRNA central domain where it helps coordinate assembly of the platform of the 30S subunit. The sequence is that of Small ribosomal subunit protein uS8 from Clostridium kluyveri (strain NBRC 12016).